A 64-amino-acid chain; its full sequence is Large ribosomal subunit protein bL32 (64 aa).

This sequence belongs to the bacterial ribosomal protein bL32 family.

The polypeptide is Large ribosomal subunit protein bL32 (Flavobacterium psychrophilum (strain ATCC 49511 / DSM 21280 / CIP 103535 / JIP02/86)).